We begin with the raw amino-acid sequence, 100 residues long: Urease subunit gamma (100 aa).

The protein belongs to the urease gamma subunit family. In terms of assembly, heterotrimer of UreA (gamma), UreB (beta) and UreC (alpha) subunits. Three heterotrimers associate to form the active enzyme. In terms of processing, although not discussed in the published references, Met-1 is represented in the submitted PDB entries as being modified by either a formyl, a carboxyl, or an acetyl group. The N-terminal is probably N-(dihydroxymethyl)methionine, the hydrated form of N-formylmethionine.

The protein localises to the cytoplasm. The enzyme catalyses urea + 2 H2O + H(+) = hydrogencarbonate + 2 NH4(+). Its pathway is nitrogen metabolism; urea degradation; CO(2) and NH(3) from urea (urease route): step 1/1. This Sporosarcina pasteurii (Bacillus pasteurii) protein is Urease subunit gamma.